Reading from the N-terminus, the 384-residue chain is Monomethylxanthine methyltransferase 2 (384 aa).

S-adenosyl-L-homocysteine contacts are provided by Tyr-18, Cys-61, Asn-66, Asp-100, Leu-101, Ser-139, Phe-140, and Cys-156. Tyr-157, His-160, and Trp-161 together coordinate theobromine. Residues Asn-178, Phe-262, and Asn-263 each coordinate Mg(2+). Tyr-368 lines the theobromine pocket.

Belongs to the methyltransferase superfamily. Type-7 methyltransferase family. Mg(2+) serves as cofactor. As to expression, expressed, at low levels, in young leaves, floral buds and immature fruits (grains), but not in old leaves and mature fruits. Highly expressed in developing endosperm and flower buds. Detected in young leaves.

The enzyme catalyses 7-methylxanthine + S-adenosyl-L-methionine = theobromine + S-adenosyl-L-homocysteine + H(+). The protein operates within alkaloid biosynthesis. Functionally, involved in the biosynthesis of caffeine. Catalyzes the conversion of 7-methylxanthine (7mX) to theobromine and with a lower activity of paraxanthine to caffeine. Does not have 1-N-methylation activity. The polypeptide is Monomethylxanthine methyltransferase 2 (Coffea arabica (Arabian coffee)).